The following is a 638-amino-acid chain: Methyl-accepting chemotaxis protein McpQ (638 aa).

Residues 18-38 form a helical membrane-spanning segment; sequence LGLGFGLVLLLTLAITLTGWH. The region spanning 45 to 282 is the HBM domain; that stretch reads DRGDKLGNIS…SQTEVRDAAA (238 aa). A helical membrane pass occupies residues 287–307; the sequence is TLLTVATVLALALGLLAAWAI. Residues 309 to 361 enclose the HAMP domain; the sequence is RQIIIPLRQTLRAAERVASGDLTQSLQVQRRDELGQLQASMHRMTQGLRELIG. The 237-residue stretch at 366-602 folds into the Methyl-accepting transducer domain; that stretch reads GVTQIASAAE…EINRSVMNVR (237 aa).

It belongs to the methyl-accepting chemotaxis (MCP) protein family.

The protein localises to the cell membrane. Functionally, chemotactic-signal transducers respond to changes in the concentration of attractants and repellents in the environment, transduce a signal from the outside to the inside of the cell, and facilitate sensory adaptation through the variation of the level of methylation. McpQ recognizes specifically citrate and citrate/metal(2+) complexes. Binds citrate/metal(2+) complexes with higher affinity than free citrate, and mediates preferentially chemotaxis toward citrate/metal(2+) complexes. The protein is Methyl-accepting chemotaxis protein McpQ of Pseudomonas putida (strain ATCC 47054 / DSM 6125 / CFBP 8728 / NCIMB 11950 / KT2440).